The primary structure comprises 289 residues: MYG1 protein TC_0665 (289 aa).

Belongs to the MYG1 family.

This chain is MYG1 protein TC_0665, found in Chlamydia muridarum (strain MoPn / Nigg).